The sequence spans 446 residues: 3-phosphoshikimate 1-carboxyvinyltransferase (446 aa).

3-phosphoshikimate-binding residues include Lys-21, Ser-22, and Arg-26. Residue Lys-21 participates in phosphoenolpyruvate binding. 2 residues coordinate phosphoenolpyruvate: Gly-94 and Arg-122. 3-phosphoshikimate contacts are provided by Ser-167, Gln-169, Asp-315, and Lys-342. Gln-169 is a binding site for phosphoenolpyruvate. Asp-315 (proton acceptor) is an active-site residue. Positions 346 and 388 each coordinate phosphoenolpyruvate.

This sequence belongs to the EPSP synthase family. Monomer.

The protein resides in the cytoplasm. The enzyme catalyses 3-phosphoshikimate + phosphoenolpyruvate = 5-O-(1-carboxyvinyl)-3-phosphoshikimate + phosphate. It participates in metabolic intermediate biosynthesis; chorismate biosynthesis; chorismate from D-erythrose 4-phosphate and phosphoenolpyruvate: step 6/7. Functionally, catalyzes the transfer of the enolpyruvyl moiety of phosphoenolpyruvate (PEP) to the 5-hydroxyl of shikimate-3-phosphate (S3P) to produce enolpyruvyl shikimate-3-phosphate and inorganic phosphate. This chain is 3-phosphoshikimate 1-carboxyvinyltransferase, found in Alkalilimnicola ehrlichii (strain ATCC BAA-1101 / DSM 17681 / MLHE-1).